A 270-amino-acid polypeptide reads, in one-letter code: Interleukin-1 beta (270 aa).

The propeptide occupies 1 to 118 (MARVPEPTSE…KCDDNAFVHD (118 aa)).

This sequence belongs to the IL-1 family. In terms of assembly, monomer. In its precursor form, weakly interacts with full-length MEFV; the mature cytokine does not interact at all. Interacts with integrins ITGAV:ITGBV and ITGA5:ITGB1; integrin-binding is required for IL1B signaling. Interacts with cargo receptor TMED10; the interaction is direct and is required for the secretion of IL1B mature form. Interacts with HSP90AB1; the interaction facilitates cargo translocation into the ERGIC. Interacts with HSP90B1; the interaction facilitates cargo translocation into the ERGIC.

It localises to the cytoplasm. The protein resides in the cytosol. The protein localises to the secreted. It is found in the lysosome. Its subcellular location is the extracellular exosome. Functionally, potent pro-inflammatory cytokine. Initially discovered as the major endogenous pyrogen, induces prostaglandin synthesis, neutrophil influx and activation, T-cell activation and cytokine production, B-cell activation and antibody production, and fibroblast proliferation and collagen production. Promotes Th17 differentiation of T-cells. Synergizes with IL12/interleukin-12 to induce IFNG synthesis from T-helper 1 (Th1) cells. Plays a role in angiogenesis by inducing VEGF production synergistically with TNF and IL6. Involved in transduction of inflammation downstream of pyroptosis: its mature form is specifically released in the extracellular milieu by passing through the gasdermin-D (GSDMD) pore. In Mustela putorius furo (European domestic ferret), this protein is Interleukin-1 beta (IL1B).